A 423-amino-acid polypeptide reads, in one-letter code: MKAQPPLRLTAQAMAFVLAGGRGSRLKELTDRRAKPAVYFGGKARIIDFALSNAMNSGIRKMAIATQYKAHSLIRHIQRGWNFFREERNEYLDILPASQRVDENRWYLGTADAVTQNIDIVDSYDIKYVIILAGDHVYKMDYEIMLRQHCETGADVTIGCLTVPRAEATAFGVMHVDANLRITDFLEKPADPPGIPGDEANALASMGIYVFDWAFLRDLLIRDAEDPNSSHDFGHDLIPAIVKNGKAMAHRFSDSCVMTGLETEPYWRDVGTIDAFWQANIDLTDFTPKLDLYDREWPIWTYSQIVPPAKFIHDSENRRGTAISSLVSGDCIVSGSEIRSSLLFTGCRTHSYSSMSHVVALPHVTVNRKADLTNCVLDRGVVVPEGLVIGQDAEEDARWFRRSEGGIVLVTQDMLDARARALN.

Alpha-D-glucose 1-phosphate is bound by residues tyrosine 107, glycine 172, glutamate 187–lysine 188, and serine 205.

The protein belongs to the bacterial/plant glucose-1-phosphate adenylyltransferase family. In terms of assembly, homotetramer.

It catalyses the reaction alpha-D-glucose 1-phosphate + ATP + H(+) = ADP-alpha-D-glucose + diphosphate. Its pathway is glycan biosynthesis; glycogen biosynthesis. In terms of biological role, involved in the biosynthesis of ADP-glucose, a building block required for the elongation reactions to produce glycogen. Catalyzes the reaction between ATP and alpha-D-glucose 1-phosphate (G1P) to produce pyrophosphate and ADP-Glc. The protein is Glucose-1-phosphate adenylyltransferase of Cereibacter sphaeroides (strain ATCC 17029 / ATH 2.4.9) (Rhodobacter sphaeroides).